Consider the following 63-residue polypeptide: MSRICAICGKGPSFGNNVSHANNKTRTVWYPNLQKIKAVRNGSVKTIKVCTRCIRSGHVTKAL.

This sequence belongs to the bacterial ribosomal protein bL28 family.

The protein is Large ribosomal subunit protein bL28 of Pelobacter propionicus (strain DSM 2379 / NBRC 103807 / OttBd1).